A 499-amino-acid chain; its full sequence is Ribose import ATP-binding protein RbsA (499 aa).

ABC transporter domains follow at residues 3–240 (VEMS…VGRE) and 250–494 (LEPG…TGGD). An ATP-binding site is contributed by 35–42 (GENGAGKS).

It belongs to the ABC transporter superfamily. Ribose importer (TC 3.A.1.2.1) family. As to quaternary structure, the complex is composed of an ATP-binding protein (RbsA), two transmembrane proteins (RbsC) and a solute-binding protein (RbsB).

The protein resides in the cell membrane. It carries out the reaction D-ribose(out) + ATP + H2O = D-ribose(in) + ADP + phosphate + H(+). In terms of biological role, part of the ABC transporter complex RbsABC involved in ribose import. Responsible for energy coupling to the transport system. This is Ribose import ATP-binding protein RbsA from Shouchella clausii (strain KSM-K16) (Alkalihalobacillus clausii).